The sequence spans 447 residues: Argininosuccinate synthase (447 aa).

Residues 20–28 (AFSGGLDTS) and Ala-46 each bind ATP. Tyr-102 is an L-citrulline binding site. ATP contacts are provided by Gly-132 and Thr-134. L-aspartate-binding residues include Thr-134, Asn-138, and Asp-139. Asn-138 lines the L-citrulline pocket. Asp-139 serves as a coordination point for ATP. 2 residues coordinate L-citrulline: Arg-142 and Ser-195. Asp-197 contributes to the ATP binding site. Thr-204, Glu-206, and Glu-283 together coordinate L-citrulline.

The protein belongs to the argininosuccinate synthase family. Type 2 subfamily. Homotetramer.

It is found in the cytoplasm. It catalyses the reaction L-citrulline + L-aspartate + ATP = 2-(N(omega)-L-arginino)succinate + AMP + diphosphate + H(+). The protein operates within amino-acid biosynthesis; L-arginine biosynthesis; L-arginine from L-ornithine and carbamoyl phosphate: step 2/3. In Neisseria meningitidis serogroup B (strain ATCC BAA-335 / MC58), this protein is Argininosuccinate synthase (argG).